The chain runs to 437 residues: Serine--tRNA ligase (437 aa).

244–246 (TAE) is an L-serine binding site. 275–277 (RSE) contacts ATP. E298 contributes to the L-serine binding site. 362 to 365 (EISS) contacts ATP. L-serine is bound at residue S397.

It belongs to the class-II aminoacyl-tRNA synthetase family. Type-1 seryl-tRNA synthetase subfamily. As to quaternary structure, homodimer. The tRNA molecule binds across the dimer.

Its subcellular location is the cytoplasm. It catalyses the reaction tRNA(Ser) + L-serine + ATP = L-seryl-tRNA(Ser) + AMP + diphosphate + H(+). It carries out the reaction tRNA(Sec) + L-serine + ATP = L-seryl-tRNA(Sec) + AMP + diphosphate + H(+). It functions in the pathway aminoacyl-tRNA biosynthesis; selenocysteinyl-tRNA(Sec) biosynthesis; L-seryl-tRNA(Sec) from L-serine and tRNA(Sec): step 1/1. Catalyzes the attachment of serine to tRNA(Ser). Is also able to aminoacylate tRNA(Sec) with serine, to form the misacylated tRNA L-seryl-tRNA(Sec), which will be further converted into selenocysteinyl-tRNA(Sec). This chain is Serine--tRNA ligase, found in Nitrosomonas eutropha (strain DSM 101675 / C91 / Nm57).